The sequence spans 286 residues: Beta-lactamase SHV-24 (286 aa).

The first 21 residues, 1 to 21 (MRYIRLCIISLLATLPLAVHA), serve as a signal peptide directing secretion. Serine 66 functions as the Acyl-ester intermediate in the catalytic mechanism. Cysteine 73 and cysteine 119 form a disulfide bridge. Glutamate 164 serves as the catalytic Proton acceptor. 230 to 232 (KTG) lines the substrate pocket.

It belongs to the class-A beta-lactamase family.

It carries out the reaction a beta-lactam + H2O = a substituted beta-amino acid. Functionally, hydrolyzes ampicillin. Can also hydrolyze cephaloridine, aztreonam and ceftazidime with a low catalytic rate. This Escherichia coli protein is Beta-lactamase SHV-24 (bla).